Consider the following 187-residue polypeptide: Aminodeoxychorismate synthase component 2 (187 aa).

The Glutamine amidotransferase type-1 domain maps to 1–187 (MILLIDNYDS…HQLLANFLHR (187 aa)). Residues Cys79, His168, and Glu170 contribute to the active site.

In terms of assembly, monomer. Heterodimer consisting of two non-identical subunits: a glutamine amidotransferase subunit (PabA) and a aminodeoxychorismate synthase subunit (PabB).

The catalysed reaction is chorismate + L-glutamine = 4-amino-4-deoxychorismate + L-glutamate. Its pathway is cofactor biosynthesis; tetrahydrofolate biosynthesis; 4-aminobenzoate from chorismate: step 1/2. Inhibited by 6-diazo-5-oxo-L-norleucine (DON). The inhibition is competitive with glutamine, but uncompetitive with chorismate. In terms of biological role, part of a heterodimeric complex that catalyzes the two-step biosynthesis of 4-amino-4-deoxychorismate (ADC), a precursor of p-aminobenzoate (PABA) and tetrahydrofolate. In the first step, a glutamine amidotransferase (PabA) generates ammonia as a substrate that, along with chorismate, is used in the second step, catalyzed by aminodeoxychorismate synthase (PabB) to produce ADC. PabA converts glutamine into glutamate only in the presence of stoichiometric amounts of PabB. This chain is Aminodeoxychorismate synthase component 2, found in Escherichia coli (strain K12).